The primary structure comprises 94 residues: Co-chaperonin GroES (94 aa).

This sequence belongs to the GroES chaperonin family. As to quaternary structure, heptamer of 7 subunits arranged in a ring. Interacts with the chaperonin GroEL.

Its subcellular location is the cytoplasm. Functionally, together with the chaperonin GroEL, plays an essential role in assisting protein folding. The GroEL-GroES system forms a nano-cage that allows encapsulation of the non-native substrate proteins and provides a physical environment optimized to promote and accelerate protein folding. GroES binds to the apical surface of the GroEL ring, thereby capping the opening of the GroEL channel. The chain is Co-chaperonin GroES from Clostridium beijerinckii (strain ATCC 51743 / NCIMB 8052) (Clostridium acetobutylicum).